Consider the following 449-residue polypeptide: MAKEINNDTIAKFENDLNNHPVFNVASHAAQENGIYKASQNLQTKIDLDPIFSIEIDTGKPADQKQSGRCWMFSALNTMRHPLQKKFKLQDFELSQNYTNFWDKFEKSNWFFENVIATADKDLGDRKVSFLFATPQQDGGQWDMLCGIIEKYGIVPKSVYPETANATNSSALNDTLNTLLRKDGLELRRLVNAGKSEDEVQARKEEMLNDVFRVLAISTCVPPKKFNFEYRDDNHNYHIDKDITPKEFFDKYVGMDLANHISTINAPTSDKPFHKVFSVEYLGNVEGGRQVRHLNLKVDEMKDLIIKQLNNGEVVWFGSNVVKDSERRAGLLATNLYRRDQLFDVDFSMSKADKLDSGESMMDHAMVITGVDIVDGKPTKWKIENSWGEKPGFKGYFVMSDSWFDSFVYQAVINKDILPEDLKKAYDEGKDNPIQLLPWDPMGALAFKY.

Active-site residues include Cys-70, His-364, and Asn-385.

Belongs to the peptidase C1 family. In terms of assembly, homohexamer.

The protein resides in the cytoplasm. It carries out the reaction Inactivates bleomycin B2 (a cytotoxic glycometallopeptide) by hydrolysis of a carboxyamide bond of beta-aminoalanine, but also shows general aminopeptidase activity. The specificity varies somewhat with source, but amino acid arylamides of Met, Leu and Ala are preferred.. The sequence is that of Aminopeptidase C (pepC) from Lactobacillus helveticus (Lactobacillus suntoryeus).